We begin with the raw amino-acid sequence, 531 residues long: Poly(A)-specific ribonuclease PNLDC1 (531 aa).

Asp-28, Glu-30, Asp-271, and Asp-365 together coordinate Mg(2+). The helical transmembrane segment at 506–526 threads the bilayer; the sequence is ITCLLQVCSIVTTWAMIAFLL.

It belongs to the CAF1 family. Mg(2+) is required as a cofactor. In terms of tissue distribution, specifically expressed in embryonic stem cells. Highly expressed in testis.

The protein localises to the endoplasmic reticulum membrane. It carries out the reaction Exonucleolytic cleavage of poly(A) to 5'-AMP.. 3'-exoribonuclease that has a preference for poly(A) tails of mRNAs, thereby efficiently degrading poly(A) tails. Exonucleolytic degradation of the poly(A) tail is often the first step in the decay of eukaryotic mRNAs and is also used to silence certain maternal mRNAs translationally during oocyte maturation and early embryonic development. May act as a regulator of multipotency in embryonic stem cells. Is a critical factor for proper spermatogenesis, involved in pre-piRNAs processing to generate mature piRNAs. The chain is Poly(A)-specific ribonuclease PNLDC1 from Mus musculus (Mouse).